We begin with the raw amino-acid sequence, 95 residues long: Pyrimidine/purine nucleoside phosphorylase (95 aa).

The protein belongs to the nucleoside phosphorylase PpnP family.

The enzyme catalyses a purine D-ribonucleoside + phosphate = a purine nucleobase + alpha-D-ribose 1-phosphate. It catalyses the reaction adenosine + phosphate = alpha-D-ribose 1-phosphate + adenine. The catalysed reaction is cytidine + phosphate = cytosine + alpha-D-ribose 1-phosphate. It carries out the reaction guanosine + phosphate = alpha-D-ribose 1-phosphate + guanine. The enzyme catalyses inosine + phosphate = alpha-D-ribose 1-phosphate + hypoxanthine. It catalyses the reaction thymidine + phosphate = 2-deoxy-alpha-D-ribose 1-phosphate + thymine. The catalysed reaction is uridine + phosphate = alpha-D-ribose 1-phosphate + uracil. It carries out the reaction xanthosine + phosphate = alpha-D-ribose 1-phosphate + xanthine. Catalyzes the phosphorolysis of diverse nucleosides, yielding D-ribose 1-phosphate and the respective free bases. Can use uridine, adenosine, guanosine, cytidine, thymidine, inosine and xanthosine as substrates. Also catalyzes the reverse reactions. The polypeptide is Pyrimidine/purine nucleoside phosphorylase (Enterobacter sp. (strain 638)).